The primary structure comprises 794 residues: DNA ligase (794 aa).

NAD(+) contacts are provided by residues 35–39 (DAEYD), 84–85 (SL), and glutamate 126. Residue lysine 128 is the N6-AMP-lysine intermediate of the active site. The NAD(+) site is built by arginine 149, glutamate 186, lysine 302, and lysine 326. Zn(2+) is bound by residues cysteine 420, cysteine 423, cysteine 450, and cysteine 456. Residues 711 to 794 (VEGLPLAGQT…KLFDEHGVAR (84 aa)) enclose the BRCT domain.

This sequence belongs to the NAD-dependent DNA ligase family. LigA subfamily. Mg(2+) is required as a cofactor. Mn(2+) serves as cofactor.

It catalyses the reaction NAD(+) + (deoxyribonucleotide)n-3'-hydroxyl + 5'-phospho-(deoxyribonucleotide)m = (deoxyribonucleotide)n+m + AMP + beta-nicotinamide D-nucleotide.. DNA ligase that catalyzes the formation of phosphodiester linkages between 5'-phosphoryl and 3'-hydroxyl groups in double-stranded DNA using NAD as a coenzyme and as the energy source for the reaction. It is essential for DNA replication and repair of damaged DNA. This Pseudomonas aeruginosa (strain LESB58) protein is DNA ligase.